A 578-amino-acid chain; its full sequence is XK-related protein 6 (578 aa).

The next 7 membrane-spanning stretches (helical) occupy residues 86–106 (WIVL…WLAV), 114–134 (FLWS…VQIL), 253–273 (WLQC…LASY), 307–327 (VLSL…FVVL), 348–368 (WEEV…WFNV), 377–397 (MVAY…LWYA), and 410–430 (LALC…VLYY).

The protein belongs to the XK family.

Its subcellular location is the cell membrane. In Tetraodon nigroviridis (Spotted green pufferfish), this protein is XK-related protein 6 (xkr6).